The primary structure comprises 71 residues: ATP synthase F(0) complex subunit e, mitochondrial (71 aa).

Residue K34 is modified to N6-acetyllysine. Position 68 is a phosphoserine (S68).

Belongs to the ATPase e subunit family. Component of the ATP synthase complex composed at least of ATP5F1A/subunit alpha, ATP5F1B/subunit beta, ATP5MC1/subunit c (homooctomer), MT-ATP6/subunit a, MT-ATP8/subunit 8, ATP5ME/subunit e, ATP5MF/subunit f, ATP5MG/subunit g, ATP5MK/subunit k, ATP5MJ/subunit j, ATP5F1C/subunit gamma, ATP5F1D/subunit delta, ATP5F1E/subunit epsilon, ATP5PF/subunit F6, ATP5PB/subunit b, ATP5PD/subunit d, ATP5PO/subunit OSCP. ATP synthase complex consists of a soluble F(1) head domain (subunits alpha(3) and beta(3)) - the catalytic core - and a membrane F(0) domain - the membrane proton channel (subunits c, a, 8, e, f, g, k and j). These two domains are linked by a central stalk (subunits gamma, delta, and epsilon) rotating inside the F1 region and a stationary peripheral stalk (subunits F6, b, d, and OSCP). As to expression, mammary gland, liver, kidney, heart, spleen, brain and lung.

The protein localises to the mitochondrion. Its subcellular location is the mitochondrion inner membrane. Functionally, subunit e, of the mitochondrial membrane ATP synthase complex (F(1)F(0) ATP synthase or Complex V) that produces ATP from ADP in the presence of a proton gradient across the membrane which is generated by electron transport complexes of the respiratory chain. ATP synthase complex consist of a soluble F(1) head domain - the catalytic core - and a membrane F(1) domain - the membrane proton channel. These two domains are linked by a central stalk rotating inside the F(1) region and a stationary peripheral stalk. During catalysis, ATP synthesis in the catalytic domain of F(1) is coupled via a rotary mechanism of the central stalk subunits to proton translocation. In vivo, can only synthesize ATP although its ATP hydrolase activity can be activated artificially in vitro. Part of the complex F(0) domain. In Mus musculus (Mouse), this protein is ATP synthase F(0) complex subunit e, mitochondrial.